The sequence spans 358 residues: Src kinase-associated phosphoprotein 2 (358 aa).

2 positions are modified to phosphoserine: Ser5 and Ser6. The interval 62-88 is disordered; it reads ESQDKGDAEDGEEYDDPFAGPPDTISL. A Phosphotyrosine modification is found at Tyr75. Phosphoserine is present on residues Ser87 and Ser90. Residues 116-219 form the PH domain; sequence FVLKAGYLEK…WVQQLNFVLQ (104 aa). A phosphotyrosine mark is found at Tyr151 and Tyr197. Position 223 is a phosphoserine (Ser223). The disordered stretch occupies residues 232-254; that stretch reads ERGELYDDVDHPLPSSSPTRSLP. Residues 243–253 are compositionally biased toward low complexity; that stretch reads PLPSSSPTRSL. The residue at position 260 (Tyr260) is a Phosphotyrosine. A phosphoserine mark is found at Ser282 and Ser285. Residues 296-357 enclose the SH3 domain; it reads NYANFYQGLW…PKAYVMEMYD (62 aa).

It belongs to the SKAP family. In terms of assembly, interacts with FYB1, which is required for SKAP2 protein stability. Interacts with PTPNS1. Part of a complex consisting of SKAP2, FYB1 and PTPNS1. Part of a complex consisting of SKAP2, FYB1 and LILRB3. Interacts with LAT, GRB2, PTK2B and PRAM1. May interact with actin. May interact with FYN, HCK and LYN. Interacts with FASLG.

Its subcellular location is the cytoplasm. Functionally, may be involved in B-cell and macrophage adhesion processes. In B-cells, may act by coupling the B-cell receptor (BCR) to integrin activation. May play a role in src signaling pathway. The sequence is that of Src kinase-associated phosphoprotein 2 (SKAP2) from Bos taurus (Bovine).